Consider the following 198-residue polypeptide: Holliday junction branch migration complex subunit RuvA (198 aa).

The segment at 1–63 (MYDYIKGQLT…EDAHLLFGFH (63 aa)) is domain I. The segment at 64 to 142 (TEDEKDVFLK…EAPQETGHTK (79 aa)) is domain II. The flexible linker stretch occupies residues 143-147 (ARSNK). The interval 148-198 (AGNTQLDEAIEALLALGYKAKELKKIRAFFEETSETAEQYIKSALKLLMKG) is domain III.

This sequence belongs to the RuvA family. In terms of assembly, homotetramer. Forms an RuvA(8)-RuvB(12)-Holliday junction (HJ) complex. HJ DNA is sandwiched between 2 RuvA tetramers; dsDNA enters through RuvA and exits via RuvB. An RuvB hexamer assembles on each DNA strand where it exits the tetramer. Each RuvB hexamer is contacted by two RuvA subunits (via domain III) on 2 adjacent RuvB subunits; this complex drives branch migration. In the full resolvosome a probable DNA-RuvA(4)-RuvB(12)-RuvC(2) complex forms which resolves the HJ.

It localises to the cytoplasm. The RuvA-RuvB-RuvC complex processes Holliday junction (HJ) DNA during genetic recombination and DNA repair, while the RuvA-RuvB complex plays an important role in the rescue of blocked DNA replication forks via replication fork reversal (RFR). RuvA specifically binds to HJ cruciform DNA, conferring on it an open structure. The RuvB hexamer acts as an ATP-dependent pump, pulling dsDNA into and through the RuvAB complex. HJ branch migration allows RuvC to scan DNA until it finds its consensus sequence, where it cleaves and resolves the cruciform DNA. This Streptococcus pyogenes serotype M2 (strain MGAS10270) protein is Holliday junction branch migration complex subunit RuvA.